The following is a 976-amino-acid chain: MKQKNNNGTILVVVMVLSWSRVVDLKSPSNTHTQDSVSVSLPGDIILGGLFPVHEKGEGAPCGPKVYNRGVQRLEAMLYAIDRVNNDPNILPGITIGVHILDTCSRDTYALNQSLQFVRASLNNLDTSGYECADGSSPQLRKNASSGPVFGVIGGSYSSVSLQVANLLRLFHIPQVSPASTAKTLSDKTRFDLFARTVPPDTFQSVALVDILKNFNWSYVSTIHSEGSYGEYGIEALHKEATERNVCIAVAEKVPSAADDKVFDSIISKLQKKPNARGVVLFTRAEDARRILQAAKRANLSQPFHWIASDGWGKQQKLLEGLEDIAEGAITVELQSEIIADFDRYMMQLTPETNQRNPWFAEYWEDTFNCVLTSLSVKPDTSNSANSTDNKIGVKAKTECDDSYRLSEKVGYEQESKTQFVVDAVYAFAYALHNLHNDRCNTQSDQTTETRKHLQSESVWYRKISTDTKSQACPDMANYDGKEFYNNYLLNVSFIDLAGSEVKFDRQGDGLARYDILNYQRQENSSGYQYKVIGKWFNGLQLNSETVVWNKETEQPTSACSLPCEVGMIKKQQGDTCCWICDSCESFEYVYDEFTCKDCGPGLWPYADKLSCYALDIQYMKWNSLFALIPMAIAIFGIALTSIVIVLFAKNHDTPLVRASGRELSYTLLFGILVCYCNTFALIAKPTIGSCVLQRFGIGVGFSIIYSALLTKTNRISRIFHSASKSAQRLKYISPQSQVVITTSLIAIQVLITMIWMVVEPPGTRFYYPDRREVILKCKIQDMSFLFSQLYNMILITICTIYAIKTRKIPENFNESKFIGFTMYTTCIIWLAFVPIYFGTGNSYEVQTTTLCISISLSASVALVCLYSPKVYILVFHPDKNVRKLTMNSTVYRRSAAAVAQGAPTSSGYSRTHAPGTSALTGGAVGTNASSSTLPTQNSPHLDEASAQTNVAHKTNGEFLPEVGERVEPICHIVNK.

The signal sequence occupies residues 1 to 25; it reads MKQKNNNGTILVVVMVLSWSRVVDL. The Extracellular segment spans residues 26–626; the sequence is KSPSNTHTQD…IQYMKWNSLF (601 aa). 2 N-linked (GlcNAc...) asparagine glycosylation sites follow: Asn-112 and Asn-143. L-glutamate-binding positions include Ser-158 and 179–181; that span reads AST. An N-linked (GlcNAc...) asparagine glycan is attached at Asn-216. Tyr-229 lines the L-glutamate pocket. A glycan (N-linked (GlcNAc...) asparagine) is linked at Asn-299. Asp-310 lines the L-glutamate pocket. The N-linked (GlcNAc...) asparagine glycan is linked to Asn-386. Residue Lys-417 coordinates L-glutamate. Asn-491 and Asn-524 each carry an N-linked (GlcNAc...) asparagine glycan. A helical transmembrane segment spans residues 627–649; it reads ALIPMAIAIFGIALTSIVIVLFA. Residues 650 to 663 are Cytoplasmic-facing; the sequence is KNHDTPLVRASGRE. Residues 664–684 traverse the membrane as a helical segment; that stretch reads LSYTLLFGILVCYCNTFALIA. Residues 685–695 are Extracellular-facing; it reads KPTIGSCVLQR. The helical transmembrane segment at 696–714 threads the bilayer; it reads FGIGVGFSIIYSALLTKTN. Over 715 to 738 the chain is Cytoplasmic; the sequence is RISRIFHSASKSAQRLKYISPQSQ. Residues 739–759 form a helical membrane-spanning segment; it reads VVITTSLIAIQVLITMIWMVV. The Extracellular portion of the chain corresponds to 760 to 782; sequence EPPGTRFYYPDRREVILKCKIQD. The helical transmembrane segment at 783-804 threads the bilayer; it reads MSFLFSQLYNMILITICTIYAI. At 805–817 the chain is on the cytoplasmic side; it reads KTRKIPENFNESK. Residues 818 to 840 form a helical membrane-spanning segment; that stretch reads FIGFTMYTTCIIWLAFVPIYFGT. Topologically, residues 841–850 are extracellular; that stretch reads GNSYEVQTTT. A helical membrane pass occupies residues 851-876; it reads LCISISLSASVALVCLYSPKVYILVF. Topologically, residues 877 to 976 are cytoplasmic; that stretch reads HPDKNVRKLT…VEPICHIVNK (100 aa). A disordered region spans residues 920-946; that stretch reads LTGGAVGTNASSSTLPTQNSPHLDEAS. Residues 927–946 show a composition bias toward polar residues; it reads TNASSSTLPTQNSPHLDEAS.

The protein belongs to the G-protein coupled receptor 3 family. As to expression, expressed in the neurons of the larval CNS from the beginning of the first until the third instar. Expression in the third-instar larval CNS is restricted to a discrete number of somas and projections in the brain lobes and in the ventral ganglion. In the ventral nerve cord, expression is detected both in somas and projections. Expressed in the antennal lobes, the optic lobes, the central complex and the median bundle in the adult CNS.

It is found in the cell membrane. In terms of biological role, G-protein coupled receptor for glutamate. Ligand binding causes a conformation change that triggers signaling via guanine nucleotide-binding proteins (G proteins) and modulates the activity of down-stream effectors. The chain is Metabotropic glutamate receptor (mGluR) from Drosophila melanogaster (Fruit fly).